Consider the following 407-residue polypeptide: Substance-P receptor (407 aa).

The segment at 1-20 (MDNVLPVDSDLFPNTSTNTS) is disordered. Residues 1–31 (MDNVLPVDSDLFPNTSTNTSESNQFVQPTWQ) lie on the Extracellular side of the membrane. N-linked (GlcNAc...) asparagine glycans are attached at residues Asn14 and Asn18. A helical membrane pass occupies residues 32 to 54 (IVLWAAAYTVIVVTSVVGNVVVI). Residues 55-64 (WIILAHKRMR) are Cytoplasmic-facing. Residues 65 to 86 (TVTNYFLVNLAFAEACMAAFNT) traverse the membrane as a helical segment. Residues 87–106 (VVNFTYAVHNVWYYGLFYCK) are Extracellular-facing. A disulfide bridge connects residues Cys105 and Cys180. Residues 107–128 (FHNFFPIAALFASIYSMTAVAF) form a helical membrane-spanning segment. Over 129–148 (DRYMAIIHPLQPRLSATATK) the chain is Cytoplasmic. The helical transmembrane segment at 149–169 (VVIFVIWVLALLLAFPQGYYS) threads the bilayer. Residues 170–194 (TTETMPSRVVCMIEWPEHPNRTYEK) are Extracellular-facing. A helical membrane pass occupies residues 195-219 (AYHICVTVLIYFLPLLVIGYAYTVV). Topologically, residues 220 to 248 (GITLWASEIPGDSSDRYHEQVSAKRKVVK) are cytoplasmic. A helical membrane pass occupies residues 249–270 (MMIVVVCTFAICWLPFHIFFLL). Residues 271–283 (PYINPDLYLKKFI) are Extracellular-facing. A helical transmembrane segment spans residues 284–308 (QQVYLASMWLAMSSTMYNPIIYCCL). Topologically, residues 309–407 (NDRFRLGFKH…SSSFYSNMLA (99 aa)) are cytoplasmic. Residue Cys322 is the site of S-palmitoyl cysteine attachment. Residues 362–407 (VGAHEDEPEEGPKATPSSLDLTSNGSSRSNSKTMTESSSFYSNMLA) are disordered. Over residues 376–407 (TPSSLDLTSNGSSRSNSKTMTESSSFYSNMLA) the composition is skewed to polar residues.

The protein belongs to the G-protein coupled receptor 1 family. In terms of assembly, interacts with ARRB1.

It localises to the cell membrane. Functionally, this is a receptor for the tachykinin neuropeptide substance P. It is probably associated with G proteins that activate a phosphatidylinositol-calcium second messenger system. The rank order of affinity of this receptor to tachykinins is: substance P &gt; substance K &gt; neuromedin K. This Mus musculus (Mouse) protein is Substance-P receptor (Tacr1).